Consider the following 451-residue polypeptide: Glycine--tRNA ligase (451 aa).

Residues Arg101 and Glu151 each contribute to the substrate site. ATP-binding positions include 183–185 (RNE), 193–198 (FRTCEF), 267–268 (EL), and 312–315 (GLTR). 198 to 202 (FEQME) is a substrate binding site. Residue 308 to 312 (ETSAG) participates in substrate binding.

Belongs to the class-II aminoacyl-tRNA synthetase family. As to quaternary structure, homodimer.

It localises to the cytoplasm. It catalyses the reaction tRNA(Gly) + glycine + ATP = glycyl-tRNA(Gly) + AMP + diphosphate. Functionally, catalyzes the attachment of glycine to tRNA(Gly). The protein is Glycine--tRNA ligase of Treponema denticola (strain ATCC 35405 / DSM 14222 / CIP 103919 / JCM 8153 / KCTC 15104).